We begin with the raw amino-acid sequence, 1578 residues long: MAEPTKIKILGQESIIADFGLWRNYVAKDLISGCPSTTYVLITDTNIGSIYTPGFQKTFEDAATAVSPAPRLLVYHCPPGEVSKSRQTKADIEDWMLSQSPPCGRDTVVIALGGGVIGDLTGFVASTYMRGVRYVQVPTTLLAMVDSSIGGKTAIDTPLGKNLIGAIWQPTRIYIDLEFLETLPVREFVNGMAEVIKTAAISSEEEFTALEDNAEAILTAVRSERKPGQRWFEGIEDILKARILASARHKAYVVSADEREGGLRNLLNWGHSIGHAIEAILTPQVLHGECVAIGMVKEAELARHLGILKGVAVARIVKCIAAYGLPTSLKDSRIRKLTAGKHCSVDQLLFNMALDKKNDGPKKKIVLLSAIGRTYEPKASVVPNEDIGVVLAPSIEVHPGVEPASNIICIPPGSKSISNRALVLAALGSGTCRVKNLLHSDDTEVMLNALERLGAATFSWEEEGEVLVVNGKGGNLQASPSELYLGNAGTASRFLTTVATLANASSVDSSILTGNNRMKQRPIGDLVDALTANGASVEYVERKGSLPLKVAASGGFAGGRINLAAKVSSQYVSSLLMCAPYAKEPVTLKLVGGKPISQPYIDMTTAMMRSFGIDVQKSTTEEHTYHIPQGRYVNPAEYVIESDASSATYPLAIAAITGTTCTVPNIGSKSLQGDARFAVEVLGPMGCTVKQTDTSTTVVGPSDGILRPLPNVDMEPMTDAFLTASVLAAVARGDGASHTTRIYGIANQRVKECNRIKAMKDELAKFGVVCREHDDGLEIDGIDRSTLRQPAGGVYCYDDHRVAFSFSVLSLVAPQPTLILEKECVGKTWPGWWDTLRQKFSAKLEGKELKEEESSPLAGAGRATASVFIIGMRGAGKTTTGRWVAKTLNRPFVDLDTELENVEGQTIPDIVKQRGWQGFRDAELSLLQRTLKERSSGYVLACGGGIVEIPEARKLLIDYHKNKGNVMLIMRDIKQVMDFLNIDKTRPAYVEDMMGVWLRRKPWFQECSNIQYYSQHATGKLAKASEDFTRFFNVVTGEADSLSIIKRKKHSFFVSLTLPDLRTAGDILEKVCVGSDAVELRVDLLKDPASDSDIPSVDYVAEQMAFLRSYVSLPLIFTIRTKSQGGRFPDDAHDAAMELYRLAFRSGSEFVDLEIAFPDEMLRAVTEMKGYSKIIASHHDPKGELSWANMSWMKYYNRALEYGDIIKLVGVAKNLDDNTALRKFKSWAEEAHETPLIAINMGDNGQLSRILNGFMTPVSHPSLPFKAAPGQLSATEIRKGLSLMGEIKQKKFAVFGTPVSGSRSPVLHNTLFSQAGLPHEYGRLETANVEDVKDFIRSPDFGGASVTIPLKLDIMPLLDHITPEAEIIGAVNTIIPVADGDKPARLVGSNTDWQGMTLSLHNAGVETANKDASALVIGGGGTARAAIYALHSMGFSPIYVIGRSAPKLQSMVSTFPSSYNIQVIDSPETLKTIPTVAIGTIPADKPIDPVMRETLCHMFERAQEADADVVKTGEKAHRVLLEMAYKPSVTALMQLASDSNWHTIPGLEVLVGQGWYQFKHWTGISPLYEDARAAVLSS.

The 3-dehydroquinate synthase stretch occupies residues 1–384; the sequence is MAEPTKIKIL…YEPKASVVPN (384 aa). NAD(+) contacts are provided by residues 44–46, 81–84, 114–116, and Asp-119; these read DTN, EVSK, and GGV. 7-phospho-2-dehydro-3-deoxy-D-arabino-heptonate is bound at residue Arg-130. 139-140 is a binding site for NAD(+); it reads TT. 7-phospho-2-dehydro-3-deoxy-D-arabino-heptonate is bound by residues Asp-146 and Lys-152. Lys-161 provides a ligand contact to NAD(+). Position 162 (Asn-162) interacts with 7-phospho-2-dehydro-3-deoxy-D-arabino-heptonate. NAD(+) contacts are provided by residues 179–182 and Asn-190; that span reads FLET. Glu-194 serves as a coordination point for Zn(2+). 7-phospho-2-dehydro-3-deoxy-D-arabino-heptonate is bound by residues 194–197 and Lys-250; that span reads EVIK. The active-site Proton acceptor; for 3-dehydroquinate synthase activity is the Glu-260. 7-phospho-2-dehydro-3-deoxy-D-arabino-heptonate contacts are provided by residues 264 to 268 and His-271; that span reads RNLLN. Residue His-271 participates in Zn(2+) binding. The active-site Proton acceptor; for 3-dehydroquinate synthase activity is His-275. 7-phospho-2-dehydro-3-deoxy-D-arabino-heptonate is bound by residues His-287 and Lys-356. Residue His-287 coordinates Zn(2+). The tract at residues 397 to 842 is EPSP synthase; that stretch reads VHPGVEPASN…WDTLRQKFSA (446 aa). The active-site For EPSP synthase activity is Cys-824. Residues 864-1055 are shikimate kinase; the sequence is TASVFIIGMR…KRKKHSFFVS (192 aa). 871-878 contributes to the ATP binding site; sequence GMRGAGKT. The interval 1056-1276 is 3-dehydroquinase; it reads LTLPDLRTAG…AAPGQLSATE (221 aa). The active-site Proton acceptor; for 3-dehydroquinate dehydratase activity is His-1179. Catalysis depends on Lys-1207, which acts as the Schiff-base intermediate with substrate; for 3-dehydroquinate dehydratase activity. The tract at residues 1289–1578 is shikimate dehydrogenase; it reads QKKFAVFGTP…EDARAAVLSS (290 aa).

In the N-terminal section; belongs to the sugar phosphate cyclases superfamily. Dehydroquinate synthase family. The protein in the 2nd section; belongs to the EPSP synthase family. This sequence in the 3rd section; belongs to the shikimate kinase family. It in the 4th section; belongs to the type-I 3-dehydroquinase family. In the C-terminal section; belongs to the shikimate dehydrogenase family. Homodimer. It depends on Zn(2+) as a cofactor.

It localises to the cytoplasm. It catalyses the reaction 7-phospho-2-dehydro-3-deoxy-D-arabino-heptonate = 3-dehydroquinate + phosphate. The catalysed reaction is 3-dehydroquinate = 3-dehydroshikimate + H2O. It carries out the reaction shikimate + NADP(+) = 3-dehydroshikimate + NADPH + H(+). The enzyme catalyses shikimate + ATP = 3-phosphoshikimate + ADP + H(+). It catalyses the reaction 3-phosphoshikimate + phosphoenolpyruvate = 5-O-(1-carboxyvinyl)-3-phosphoshikimate + phosphate. It participates in metabolic intermediate biosynthesis; chorismate biosynthesis; chorismate from D-erythrose 4-phosphate and phosphoenolpyruvate: step 2/7. It functions in the pathway metabolic intermediate biosynthesis; chorismate biosynthesis; chorismate from D-erythrose 4-phosphate and phosphoenolpyruvate: step 3/7. Its pathway is metabolic intermediate biosynthesis; chorismate biosynthesis; chorismate from D-erythrose 4-phosphate and phosphoenolpyruvate: step 4/7. The protein operates within metabolic intermediate biosynthesis; chorismate biosynthesis; chorismate from D-erythrose 4-phosphate and phosphoenolpyruvate: step 5/7. It participates in metabolic intermediate biosynthesis; chorismate biosynthesis; chorismate from D-erythrose 4-phosphate and phosphoenolpyruvate: step 6/7. Functionally, the AROM polypeptide catalyzes 5 consecutive enzymatic reactions in prechorismate polyaromatic amino acid biosynthesis. This chain is Pentafunctional AROM polypeptide, found in Aspergillus flavus (strain ATCC 200026 / FGSC A1120 / IAM 13836 / NRRL 3357 / JCM 12722 / SRRC 167).